The sequence spans 670 residues: MAIFKDCEVEIFSEEDGFRNAWYRAILEETPTNPTSESKKLRFSYMTKSLNKEGSSSPPTVEQRFIRPVPPENLYNGVVFEEGTMVDADYKHRWRTGVVINKMENDSYLVLFDCPPDIIQFETKHLRAHLDWTGSEWVQPEVRELSKSMFSPGTLVEVSCVIDKVEVSWVTAMIVKEIEESGEKKFIVKVCNKHLSCRVDEAKPNMTVDSCCVRPRPPLFFVEEYDLRDCVEVFHGSSWRQGVVKGVHIEKQYTVTLEATKDKLVVKHSDLRPFKVWEDGVWHNGPQQKPVKESPSNAIKQKPMCSSSGARPMTPKMATKHARISFNPEENVEELSVAETVAATGKLEKMGIAEESVSCVTPLKQTEANAEGNKLEPMRNQNCLRNDSTQQMLPEEENSKDGSTKRKREEKHNSASSVMDEIDGTCNGSESEISNTGKSICNNDDVDDQPLSTELPYYQSLSVVNSFAADAEETPAKSARTISPFAKKLPFWKSYETDELYKSLPQSPHFSPLFKAKEDIREWSAVGMMVTFYCLLKEVKDLQLDDSSSKLSSLSSSLAELEKHGFNVTDPLSRISKVLPLQDKRAKKAEERKCLEKKIECEEIERKRFEEEFADFERIIIEKKRQALVAKEKKEAADKRIGEMKTCAETIDQEIKDEELEFQTTVSTPW.

2 disordered regions span residues 283 to 315 (HNGPQQKPVKESPSNAIKQKPMCSSSGARPMTP) and 368 to 445 (ANAE…NNDD). Composition is skewed to polar residues over residues 294 to 309 (SPSNAIKQKPMCSSSG), 379 to 392 (RNQNCLRNDSTQQM), and 426 to 442 (CNGSESEISNTGKSICN). In terms of domain architecture, DUF724 spans 484-669 (PFAKKLPFWK…LEFQTTVSTP (186 aa)).

In terms of tissue distribution, expressed in stems and flowers.

It is found in the nucleus. In terms of biological role, may be involved in the polar growth of plant cells via transportation of RNAs. The chain is DUF724 domain-containing protein 1 from Arabidopsis thaliana (Mouse-ear cress).